A 394-amino-acid chain; its full sequence is Phosphoglycerate kinase (394 aa).

Residues 21 to 23, arginine 36, 59 to 62, arginine 118, and arginine 151 each bind substrate; these read DFN and HFGR. Residues lysine 201, glutamate 323, and 349-352 contribute to the ATP site; that span reads GGDS.

The protein belongs to the phosphoglycerate kinase family. In terms of assembly, monomer.

It localises to the cytoplasm. It carries out the reaction (2R)-3-phosphoglycerate + ATP = (2R)-3-phospho-glyceroyl phosphate + ADP. It functions in the pathway carbohydrate degradation; glycolysis; pyruvate from D-glyceraldehyde 3-phosphate: step 2/5. This chain is Phosphoglycerate kinase, found in Brevibacillus brevis (strain 47 / JCM 6285 / NBRC 100599).